The following is a 374-amino-acid chain: tRNA-specific 2-thiouridylase MnmA (374 aa).

ATP contacts are provided by residues 17–24 (GMSGGVDS) and Met43. Positions 103-105 (NPD) are interaction with target base in tRNA. The Nucleophile role is filled by Cys108. Cys108 and Cys204 are joined by a disulfide. Position 132 (Gly132) interacts with ATP. An interaction with tRNA region spans residues 154–156 (KDQ). Cys204 serves as the catalytic Cysteine persulfide intermediate. The segment at 316–317 (RY) is interaction with tRNA.

Belongs to the MnmA/TRMU family.

The protein localises to the cytoplasm. The catalysed reaction is S-sulfanyl-L-cysteinyl-[protein] + uridine(34) in tRNA + AH2 + ATP = 2-thiouridine(34) in tRNA + L-cysteinyl-[protein] + A + AMP + diphosphate + H(+). Catalyzes the 2-thiolation of uridine at the wobble position (U34) of tRNA, leading to the formation of s(2)U34. In Pseudomonas fluorescens (strain SBW25), this protein is tRNA-specific 2-thiouridylase MnmA.